The chain runs to 356 residues: 1-deoxy-D-xylulose 5-phosphate reductoisomerase (356 aa).

T7, G8, S9, I10, G31, N33, and N111 together coordinate NADPH. Residue K112 coordinates 1-deoxy-D-xylulose 5-phosphate. Position 113 (E113) interacts with NADPH. D131 lines the Mn(2+) pocket. S132, E133, S155, and H178 together coordinate 1-deoxy-D-xylulose 5-phosphate. Residue E133 participates in Mn(2+) binding. G184 is a binding site for NADPH. Residues S191, N196, K197, and E200 each coordinate 1-deoxy-D-xylulose 5-phosphate. E200 provides a ligand contact to Mn(2+).

It belongs to the DXR family. Mg(2+) is required as a cofactor. It depends on Mn(2+) as a cofactor.

It carries out the reaction 2-C-methyl-D-erythritol 4-phosphate + NADP(+) = 1-deoxy-D-xylulose 5-phosphate + NADPH + H(+). The protein operates within isoprenoid biosynthesis; isopentenyl diphosphate biosynthesis via DXP pathway; isopentenyl diphosphate from 1-deoxy-D-xylulose 5-phosphate: step 1/6. Functionally, catalyzes the NADPH-dependent rearrangement and reduction of 1-deoxy-D-xylulose-5-phosphate (DXP) to 2-C-methyl-D-erythritol 4-phosphate (MEP). The chain is 1-deoxy-D-xylulose 5-phosphate reductoisomerase from Campylobacter jejuni subsp. jejuni serotype O:6 (strain 81116 / NCTC 11828).